The primary structure comprises 542 residues: Nuclear hormone receptor family member nhr-35 (542 aa).

A DNA-binding region (nuclear receptor) is located at residues 74-149 (NSICHICSDV…SGMRDDQVQS (76 aa)). 2 consecutive NR C4-type zinc fingers follow at residues 77–97 (CHIC…CNGC) and 113–137 (CRFE…FMKC). Positions 186–438 (EYDQLLESLL…VLMEELILAE (253 aa)) constitute an NR LBD domain. Residues 445–487 (RQDQTPCSIMNDTPSGSQDMCSPCPEDLLRTSTSSNSPTNSSL) form a disordered region. A compositionally biased stretch (polar residues) spans 448-464 (QTPCSIMNDTPSGSQDM). Residues 475-487 (TSTSSNSPTNSSL) are compositionally biased toward low complexity.

This sequence belongs to the nuclear hormone receptor family.

It localises to the nucleus. Orphan nuclear receptor. This Caenorhabditis elegans protein is Nuclear hormone receptor family member nhr-35 (nhr-35).